The primary structure comprises 422 residues: Mannose-1-phosphate guanylyltransferase regulatory subunit alpha-B (422 aa).

The substrate-binding domain stretch occupies residues 2–253; the sequence is LKAIILIGGP…QHFWSQIKSA (252 aa). Positions 85 and 249 each coordinate GDP-alpha-D-mannose. Residues 275-422 form a hexapeptide repeat domain region; the sequence is LATNQGGTPK…NRSFKNQIIL (148 aa). A C-loop region spans residues 358-386; sequence TPSDPNPNDPYAKIDSETLFRDGGLTPSI.

Belongs to the transferase hexapeptide repeat family. As to quaternary structure, component of the GMPPA-GMPPB mannose-1-phosphate guanylyltransferase complex composed of 4 GMPPA subunits and 8 GMPPB subunits; the complex is organized into three layers, a central layer made up of 2 GMPPA dimers sandwiched between two layers each made up of 2 GMPPB dimers.

It participates in nucleotide-sugar biosynthesis; GDP-alpha-D-mannose biosynthesis; GDP-alpha-D-mannose from alpha-D-mannose 1-phosphate (GTP route): step 1/1. Its function is as follows. Regulatory subunit of the GMPPA-GMPPB mannose-1-phosphate guanylyltransferase complex; reduces the catalytic activity of GMPPB when part of the complex. Mediates allosteric feedback inhibition of GMPPB catalytic activity upon binding GDP-alpha-D-mannose. Together with GMPPB regulates GDP-alpha-D-mannose levels. One of two paralogs (gmppaa and gmppab) that may have redundant functions. The chain is Mannose-1-phosphate guanylyltransferase regulatory subunit alpha-B (gmppab) from Danio rerio (Zebrafish).